Consider the following 263-residue polypeptide: Hydroxyacylglutathione hydrolase (263 aa).

Zn(2+) is bound by residues H55, H57, D59, H60, H117, D134, and H172.

Belongs to the metallo-beta-lactamase superfamily. Glyoxalase II family. Monomer. The cofactor is Zn(2+).

It catalyses the reaction an S-(2-hydroxyacyl)glutathione + H2O = a 2-hydroxy carboxylate + glutathione + H(+). Its pathway is secondary metabolite metabolism; methylglyoxal degradation; (R)-lactate from methylglyoxal: step 2/2. Thiolesterase that catalyzes the hydrolysis of S-D-lactoyl-glutathione to form glutathione and D-lactic acid. The sequence is that of Hydroxyacylglutathione hydrolase from Shewanella baltica (strain OS155 / ATCC BAA-1091).